Here is a 352-residue protein sequence, read N- to C-terminus: C-C chemokine receptor type 5 (352 aa).

Over 1–30 (MDYQVSSPTYDIDYYTSEPCQKINVKQIAA) the chain is Extracellular. Tyrosine 3 carries the post-translational modification Sulfotyrosine. Serine 6 and serine 7 each carry an O-linked (GalNAc...) serine glycan. 3 positions are modified to sulfotyrosine: tyrosine 10, tyrosine 14, and tyrosine 15. 2 cysteine pairs are disulfide-bonded: cysteine 20-cysteine 269 and cysteine 101-cysteine 178. A helical transmembrane segment spans residues 31-58 (RLLPPLYSLVFIFGFVGNILVVLILINC). Topologically, residues 59–68 (KRLKSMTDIY) are cytoplasmic. A helical membrane pass occupies residues 69-89 (LLNLAISDLLFLLTVPFWAHY). Residues 90-102 (AAAQWDFGNTMCQ) lie on the Extracellular side of the membrane. Residues 103-124 (LLTGLYFIGFFSGIFFIILLTI) traverse the membrane as a helical segment. At 125 to 141 (DRYLAIVHAVFALKART) the chain is on the cytoplasmic side. Residues 142–166 (VTFGVVTSVITWVVAVFASLPRIIF) form a helical membrane-spanning segment. At 167-198 (TTSHRERLHYTCSSHFPYSQYQFWKNFHTLKI) the chain is on the extracellular side. A helical transmembrane segment spans residues 199-218 (VILGLVLPLLVMVICYSGIL). Residues 219–235 (KTLLRCRNEKKRHRAVR) are Cytoplasmic-facing. A helical membrane pass occupies residues 236 to 260 (LIFTIMIVYFLFWAPYNIVLLLNTF). Residues 261–277 (QEFFGLNNCSSSNRLDQ) lie on the Extracellular side of the membrane. Residues 278–301 (AMQVTETLGMTHCCINPIIYAFVG) form a helical membrane-spanning segment. Topologically, residues 302–352 (EKFRNYLLVFFQKHIAKRFCKCCSIFQQEAPERASSVYTRSTGEQEISVGL) are cytoplasmic. S-palmitoyl cysteine attachment occurs at residues cysteine 321, cysteine 323, and cysteine 324. Serine 336, serine 337, serine 342, and serine 349 each carry phosphoserine; by BARK1.

This sequence belongs to the G-protein coupled receptor 1 family. Interacts with PRAF2. Efficient ligand binding to CCL3/MIP-1alpha and CCL4/MIP-1beta requires sulfation, O-glycosylation and sialic acid modifications. Glycosylation on Ser-6 is required for efficient binding of CCL4. Interacts with GRK2. Interacts with ARRB1 and ARRB2. Interacts with CNIH4. Interacts with S100A4; this interaction stimulates T-lymphocyte chemotaxis. In terms of processing, sulfated on at least 2 of the N-terminal tyrosines. Sulfation is required for efficient binding of the chemokines, CCL3 and CCL4. Post-translationally, palmitoylation in the C-terminal is important for cell surface expression. Phosphorylation on serine residues in the C-terminal is stimulated by binding CC chemokines especially by APO-RANTES. In terms of processing, O-glycosylated, but not N-glycosylated. Ser-6 appears to be the major site even if Ser-7 may be also O-glycosylated. Also sialylated glycans present which contribute to chemokine binding. Thr-16 and Ser-17 may also be glycosylated and, if so, with small moieties such as a T-antigen.

It localises to the cell membrane. Receptor for a number of inflammatory CC-chemokines including CCL3/MIP-1-alpha, CCL4/MIP-1-beta and RANTES and subsequently transduces a signal by increasing the intracellular calcium ion level. May play a role in the control of granulocytic lineage proliferation or differentiation. Participates in T-lymphocyte migration to the infection site by acting as a chemotactic receptor. The protein is C-C chemokine receptor type 5 (CCR5) of Cercopithecus ascanius (Black-cheeked white-nosed monkey).